The chain runs to 887 residues: Multiple RNA-binding domain-containing protein 1 (887 aa).

The 93-residue stretch at 2–94 folds into the RRM 1 domain; the sequence is SRIIVKGLPV…SKIEVSMAKS (93 aa). Disordered stretches follow at residues 121–143, 203–276, and 297–336; these read KLLQEENRKKKKVDENKHSNIDD, KEEN…RNLA, and SEAETREKSSSYATEQNESLDTKKEEQPERAVPQKTDEEL. Phosphoserine occurs at positions 220 and 264. Over residues 264–276 the composition is skewed to basic and acidic residues; sequence SDEKENEKRRNLA. Positions 306–315 are enriched in polar residues; that stretch reads SSYATEQNES. A compositionally biased stretch (basic and acidic residues) spans 316–325; the sequence is LDTKKEEQPE. 4 consecutive RRM domains span residues 345–423, 532–604, 663–746, and 763–840; these read GRLF…PGEE, KVIL…RGPK, VSIF…LSHR, and GKII…YAEE. Residues 864-887 form a disordered region; the sequence is EMAALRNGGGRKKLDVDDEENEGF.

The protein belongs to the RRM MRD1 family. In terms of assembly, interacts with NOP1. Binds to the 35S pre-rRNA and the U3 snoRNA.

Its subcellular location is the nucleus. Functionally, involved in pre-rRNA processing. Required for maintaining steady-state levels of 40S ribosomal subunit. Required for the initial processing of pre-rRNA at the A0 to A2 sites, leading to the processing of the 23S pre-rRNA intermediate to the 18S rRNA. This chain is Multiple RNA-binding domain-containing protein 1 (MRD1), found in Saccharomyces cerevisiae (strain ATCC 204508 / S288c) (Baker's yeast).